Consider the following 478-residue polypeptide: Zinc metalloproteinase/disintegrin (478 aa).

An N-terminal signal peptide occupies residues Met-1–Ser-20. Residues Ile-21–Leu-188 constitute a propeptide that is removed on maturation. Residues Arg-194–Pro-391 enclose the Peptidase M12B domain. Cys-207 and Cys-248 form a disulfide bridge. N-linked (GlcNAc...) (complex) asparagine glycosylation occurs at Asn-279. 3 cysteine pairs are disulfide-bonded: Cys-305-Cys-386, Cys-345-Cys-370, and Cys-347-Cys-353. His-330 serves as a coordination point for Zn(2+). Glu-331 is a catalytic residue. 2 residues coordinate Zn(2+): His-334 and His-340. The N-linked (GlcNAc...) (complex) asparagine glycan is linked to Asn-369. The propeptide occupies Leu-392 to Ala-407. In terms of domain architecture, Disintegrin spans Ile-397 to Ala-478. Intrachain disulfides connect Cys-411-Cys-426, Cys-413-Cys-421, Cys-420-Cys-443, Cys-434-Cys-440, Cys-439-Cys-464, and Cys-452-Cys-471. The Cell attachment site signature appears at Arg-456–Asp-458. A propeptide spanning residues Ser-476–Ala-478 is cleaved from the precursor.

Belongs to the venom metalloproteinase (M12B) family. P-II subfamily. P-IIa sub-subfamily. As to quaternary structure, monomeric (disintegrin). Zn(2+) is required as a cofactor. Post-translationally, glycans are composed of 4 GlcNAc, 3 Man, 2 Gal, 2 NeuAC and 1 Fuc residue. As to expression, expressed by the venom gland.

The protein resides in the secreted. Functionally, impairs hemostasis in the envenomed animal. Inhibits platelet aggregation induced by ADP, thrombin, platelet-activating factor and collagen. Acts by inhibiting fibrinogen interaction with platelet receptors alpha-IIb/beta-3 (ITGA2B/ITGB3). This is Zinc metalloproteinase/disintegrin from Calloselasma rhodostoma (Malayan pit viper).